Consider the following 92-residue polypeptide: RNA-binding protein Hfq (92 aa).

The Sm domain occupies 9–68 (DPFLNALRRERVPVSVYLVNGIKLQGTIESFDQFVVLLRNTVSQMVYKHAISTVVPARNV).

It belongs to the Hfq family. Homohexamer.

RNA chaperone that binds small regulatory RNA (sRNAs) and mRNAs to facilitate mRNA translational regulation in response to envelope stress, environmental stress and changes in metabolite concentrations. Also binds with high specificity to tRNAs. The chain is RNA-binding protein Hfq from Xylella fastidiosa (strain M12).